The following is a 776-amino-acid chain: Rho guanine nucleotide exchange factor 6 (776 aa).

The 111-residue stretch at 1-111 (MNPEEQIVTW…TLLAVNKATE (111 aa)) folds into the Calponin-homology (CH) domain. The disordered stretch occupies residues 115–151 (SERPCGRSSSLSAANTSQTNPQGAVSSTVSGLQRQSK). The span at 121–151 (RSSSLSAANTSQTNPQGAVSSTVSGLQRQSK) shows a compositional bias: polar residues. Residue Ser-126 is modified to Phosphoserine. The residue at position 133 (Thr-133) is a Phosphothreonine. A phosphoserine mark is found at Ser-144 and Ser-150. In terms of domain architecture, SH3 spans 160–219 (SHQLIVKARFNFKQTNEDELSVCKGDIIYVTRVEEGGWWEGTLNGRTGWFPSNYVREIKS). Ser-225 is modified (phosphoserine). A DH domain is found at 241–421 (YYTVVLQNIL…KTLMGQCQDL (181 aa)). The region spanning 443 to 548 (DIKNLGNVIF…WLEQLNRLIR (106 aa)) is the PH domain. Ser-488 is modified (phosphoserine). Over residues 561 to 572 (SSSCSAHSSFSS) the composition is skewed to low complexity. Residues 561–581 (SSSCSAHSSFSSTGQPRGPLE) are disordered. 2 positions are modified to phosphoserine: Ser-640 and Ser-684.

In terms of assembly, interacts with PAK kinases through the SH3 domain. Interacts with GIT1. Component of cytoplasmic complexes, which also contain PXN, GIT1 and PAK1. Interacts with PARVB. Interacts with BIN2. Identified in a complex with BIN2 and GIT2. Interacts with PARVG; the guanine nucleotide exchange factor activity of ARHGEF6 is essential for PARVG-induced enhancement of cell spreading. As to expression, ubiquitous.

The protein localises to the cell projection. Its subcellular location is the lamellipodium. Its function is as follows. Acts as a RAC1 guanine nucleotide exchange factor (GEF). This chain is Rho guanine nucleotide exchange factor 6 (ARHGEF6), found in Homo sapiens (Human).